Reading from the N-terminus, the 913-residue chain is Protein translocase subunit SecA (913 aa).

ATP-binding positions include glutamine 87, 105 to 109 (GEGKT), and aspartate 512. 4 residues coordinate Zn(2+): cysteine 897, cysteine 899, cysteine 908, and histidine 909.

Belongs to the SecA family. As to quaternary structure, monomer and homodimer. Part of the essential Sec protein translocation apparatus which comprises SecA, SecYEG and auxiliary proteins SecDF-YajC and YidC. Requires Zn(2+) as cofactor.

The protein localises to the cell inner membrane. It localises to the cytoplasm. It catalyses the reaction ATP + H2O + cellular proteinSide 1 = ADP + phosphate + cellular proteinSide 2.. Functionally, part of the Sec protein translocase complex. Interacts with the SecYEG preprotein conducting channel. Has a central role in coupling the hydrolysis of ATP to the transfer of proteins into and across the cell membrane, serving both as a receptor for the preprotein-SecB complex and as an ATP-driven molecular motor driving the stepwise translocation of polypeptide chains across the membrane. This Pseudomonas fluorescens (strain ATCC BAA-477 / NRRL B-23932 / Pf-5) protein is Protein translocase subunit SecA.